The sequence spans 381 residues: tRNA pseudouridine synthase Pus10 (381 aa).

Asp226 functions as the Nucleophile in the catalytic mechanism.

Belongs to the pseudouridine synthase Pus10 family.

It carries out the reaction uridine(54) in tRNA = pseudouridine(54) in tRNA. The catalysed reaction is uridine(55) in tRNA = pseudouridine(55) in tRNA. In terms of biological role, responsible for synthesis of pseudouridine from uracil-54 and uracil-55 in the psi GC loop of transfer RNAs. This is tRNA pseudouridine synthase Pus10 from Nitrosopumilus maritimus (strain SCM1).